A 601-amino-acid chain; its full sequence is Protein NRT1/ PTR FAMILY 4.4 (601 aa).

A run of 2 helical transmembrane segments spans residues 44–64 (AALF…AVGN) and 82–102 (ANLV…GGFL). Position 112 is a phosphothreonine (Thr112). The next 10 helical transmembrane spans lie at 113–133 (MLVF…QAHL), 160–180 (TLYT…PNII), 198–218 (FFNA…TLLV), 228–248 (VGFG…VAGT), 337–357 (ILLS…ILAQ), 386–406 (AIPY…FVPL), 420–440 (LQRI…AALV), 453–473 (VMLS…SEMF), 493–513 (FLTA…SVLV), and 544–564 (HFYW…LFWS).

Belongs to the major facilitator superfamily. Proton-dependent oligopeptide transporter (POT/PTR) (TC 2.A.17) family. In terms of tissue distribution, expressed in shoots, roots and stems.

The protein localises to the membrane. The sequence is that of Protein NRT1/ PTR FAMILY 4.4 (NPF4.4) from Arabidopsis thaliana (Mouse-ear cress).